The chain runs to 31 residues: Cyclotide mden-N (31 aa).

A cross-link (cyclopeptide (Gly-Asn)) is located at residues 1-31; it reads GTIPCGESCVYIPCLTSALGCSCKNKVCYRN. Intrachain disulfides connect Cys-5–Cys-21, Cys-9–Cys-23, and Cys-14–Cys-28.

Belongs to the cyclotide family. Bracelet subfamily. In terms of processing, this is a cyclic peptide.

Functionally, probably participates in a plant defense mechanism. The chain is Cyclotide mden-N from Melicytus dentatus (Tree violet).